Consider the following 427-residue polypeptide: Putative ABC transporter substrate-binding protein YesO (427 aa).

This sequence belongs to the bacterial solute-binding protein 1 family.

In terms of biological role, may play a role in the degradation of type I rhamnogalacturonan derived from plant cell walls. The sequence is that of Putative ABC transporter substrate-binding protein YesO (yesO) from Bacillus subtilis (strain 168).